A 388-amino-acid chain; its full sequence is WD repeat-containing protein 55 (388 aa).

Residues 1-20 are compositionally biased toward acidic residues; sequence MDPTCEESPAEDSNNEEEDL. The interval 1-33 is disordered; that stretch reads MDPTCEESPAEDSNNEEEDLDSTKAAPRIRDTP. 7 WD repeats span residues 37–76, 83–122, 126–164, 167–206, 209–248, 251–290, and 293–333; these read VLEA…GETK, HHLK…LERR, AHSA…PLMD, QHEE…FELL, PQSG…ATSD, ALRA…VVGT, and QHAG…TVVV. A Phosphoserine modification is found at Ser355. The segment at 364 to 388 is disordered; the sequence is REDEEDAKAPEEVVRESDDDDDDSD. Residues 370–379 show a composition bias toward basic and acidic residues; that stretch reads AKAPEEVVRE.

It belongs to the WD repeat WDR55 family.

Its subcellular location is the nucleus. It is found in the nucleolus. The protein localises to the cytoplasm. Its function is as follows. Nucleolar protein that acts as a modulator of rRNA synthesis. Plays a central role during organogenesis. The protein is WD repeat-containing protein 55 (Wdr55) of Mus musculus (Mouse).